The chain runs to 164 residues: Monothiol glutaredoxin-S10 (164 aa).

The Glutaredoxin domain maps to 60 to 161 (EDSVKRTLAD…TMLSELDIDV (102 aa)). Cys80 contributes to the [2Fe-2S] cluster binding site.

It belongs to the glutaredoxin family. CPYC subfamily.

It is found in the cytoplasm. Functionally, may only reduce GSH-thiol disulfides, but not protein disulfides. In Oryza sativa subsp. japonica (Rice), this protein is Monothiol glutaredoxin-S10 (GRXS10).